A 103-amino-acid polypeptide reads, in one-letter code: UPF0145 protein BC_5181 (103 aa).

It belongs to the UPF0145 family.

The protein is UPF0145 protein BC_5181 of Bacillus cereus (strain ATCC 14579 / DSM 31 / CCUG 7414 / JCM 2152 / NBRC 15305 / NCIMB 9373 / NCTC 2599 / NRRL B-3711).